A 148-amino-acid polypeptide reads, in one-letter code: SsrA-binding protein (148 aa).

The disordered stretch occupies residues 124–148 (QFDKRETEKDRDWQREKARLMREKA).

The protein belongs to the SmpB family.

The protein resides in the cytoplasm. Functionally, required for rescue of stalled ribosomes mediated by trans-translation. Binds to transfer-messenger RNA (tmRNA), required for stable association of tmRNA with ribosomes. tmRNA and SmpB together mimic tRNA shape, replacing the anticodon stem-loop with SmpB. tmRNA is encoded by the ssrA gene; the 2 termini fold to resemble tRNA(Ala) and it encodes a 'tag peptide', a short internal open reading frame. During trans-translation Ala-aminoacylated tmRNA acts like a tRNA, entering the A-site of stalled ribosomes, displacing the stalled mRNA. The ribosome then switches to translate the ORF on the tmRNA; the nascent peptide is terminated with the 'tag peptide' encoded by the tmRNA and targeted for degradation. The ribosome is freed to recommence translation, which seems to be the essential function of trans-translation. This chain is SsrA-binding protein, found in Ralstonia pickettii (strain 12J).